A 570-amino-acid polypeptide reads, in one-letter code: Endo-1,4-beta-xylanase 5-like (570 aa).

Residues 1–23 (MNSIKNGFFLCMIFLLWCHVDSG) form the signal peptide. Asn-197, Asn-261, and Asn-307 each carry an N-linked (GlcNAc...) asparagine glycan. Residues 202–501 (KGVVISLKQT…TQTGDVIDKL (300 aa)) form the GH10 domain. Glu-332 serves as the catalytic Proton donor. Asn-346 carries an N-linked (GlcNAc...) asparagine glycan. Glu-439 acts as the Nucleophile in catalysis. Residues Asn-490, Asn-515, Asn-537, and Asn-545 are each glycosylated (N-linked (GlcNAc...) asparagine).

The protein belongs to the glycosyl hydrolase 10 (cellulase F) family.

It carries out the reaction Endohydrolysis of (1-&gt;4)-beta-D-xylosidic linkages in xylans.. Its pathway is glycan degradation; xylan degradation. Its function is as follows. Binds to and hydrolyzes insoluble and soluble xylan substrates. The polypeptide is Endo-1,4-beta-xylanase 5-like (Arabidopsis thaliana (Mouse-ear cress)).